The following is a 1299-amino-acid chain: Tubulin polyglutamylase TTLL5 (1299 aa).

The TTL domain occupies 62 to 407 (RYHLSYKIVR…VCQDPAQRAS (346 aa)). ATP is bound by residues K180, 186–187 (RG), 208–211 (SRYI), and 221–223 (KFD). R186 contacts a protein. L-glutamate is bound at residue R247. 268-269 (TN) serves as a coordination point for ATP. Y270, S271, and K293 together coordinate L-glutamate. Positions 353, 366, and 368 each coordinate Mg(2+). The tract at residues 378–488 (PLDLKIKASM…RGGFIRIFPT (111 aa)) is c-MTBD region. K384 is a binding site for L-glutamate. 5 disordered regions span residues 589–626 (EMNVKTETESEEEEEVALDNEEEEQEASQEESAGFLRE), 832–853 (GTHSKSSKNNNSYSDSGAKGDH), 918–941 (SSVTTSDLSPGPGHHSSLSQIPSA), 1088–1130 (RSSA…RSLQ), and 1217–1275 (SSAT…QLNG). Positions 597–617 (ESEEEEEVALDNEEEEQEASQ) are enriched in acidic residues. Low complexity predominate over residues 838-847 (SKNNNSYSDS). 3 stretches are compositionally biased toward polar residues: residues 1104–1130 (SGPTWSTQSDPQAPENHSSPPGSRSLQ), 1217–1230 (SSATASGQKPTTLP), and 1258–1275 (ATSQRASKGSSAEGQLNG).

The protein belongs to the tubulin--tyrosine ligase family. As to quaternary structure, interacts with the transcriptional coactivators NCOA1/SRC-1 and NCOA2/TIF2. Mg(2+) is required as a cofactor.

Its subcellular location is the cell projection. The protein resides in the cilium. The protein localises to the cytoplasm. It is found in the cytoskeleton. It localises to the cilium basal body. Its subcellular location is the nucleus. It catalyses the reaction L-glutamyl-[protein] + L-glutamate + ATP = gamma-L-glutamyl-L-glutamyl-[protein] + ADP + phosphate + H(+). The enzyme catalyses (L-glutamyl)(n)-gamma-L-glutamyl-L-glutamyl-[protein] + L-glutamate + ATP = (L-glutamyl)(n+1)-gamma-L-glutamyl-L-glutamyl-[protein] + ADP + phosphate + H(+). Functionally, polyglutamylase which modifies tubulin, generating polyglutamate side chains on the gamma-carboxyl group of specific glutamate residues within the C-terminal tail of tubulin. Preferentially mediates ATP-dependent initiation step of the polyglutamylation reaction over the elongation step. Preferentially modifies the alpha-tubulin tail over a beta-tail. Required for CCSAP localization to both polyglutamylated spindle and cilia microtubules. Increases the effects of transcriptional coactivator NCOA2/TIF2 in glucocorticoid receptor-mediated repression and induction and in androgen receptor-mediated induction. This Pongo abelii (Sumatran orangutan) protein is Tubulin polyglutamylase TTLL5 (TTLL5).